A 728-amino-acid polypeptide reads, in one-letter code: 1,4-alpha-glucan branching enzyme GlgB (728 aa).

D405 functions as the Nucleophile in the catalytic mechanism. Catalysis depends on E458, which acts as the Proton donor.

This sequence belongs to the glycosyl hydrolase 13 family. GlgB subfamily. Monomer.

It catalyses the reaction Transfers a segment of a (1-&gt;4)-alpha-D-glucan chain to a primary hydroxy group in a similar glucan chain.. The protein operates within glycan biosynthesis; glycogen biosynthesis. Its function is as follows. Catalyzes the formation of the alpha-1,6-glucosidic linkages in glycogen by scission of a 1,4-alpha-linked oligosaccharide from growing alpha-1,4-glucan chains and the subsequent attachment of the oligosaccharide to the alpha-1,6 position. In Salmonella paratyphi A (strain ATCC 9150 / SARB42), this protein is 1,4-alpha-glucan branching enzyme GlgB.